The chain runs to 419 residues: Glutamate-1-semialdehyde 2,1-aminomutase (419 aa).

K259 carries the post-translational modification N6-(pyridoxal phosphate)lysine.

It belongs to the class-III pyridoxal-phosphate-dependent aminotransferase family. HemL subfamily. It depends on pyridoxal 5'-phosphate as a cofactor.

It is found in the cytoplasm. It catalyses the reaction (S)-4-amino-5-oxopentanoate = 5-aminolevulinate. It functions in the pathway porphyrin-containing compound metabolism; protoporphyrin-IX biosynthesis; 5-aminolevulinate from L-glutamyl-tRNA(Glu): step 2/2. In Sulfurisphaera tokodaii (strain DSM 16993 / JCM 10545 / NBRC 100140 / 7) (Sulfolobus tokodaii), this protein is Glutamate-1-semialdehyde 2,1-aminomutase (hemL).